The sequence spans 383 residues: UDP-N-acetylglucosamine--N-acetylmuramyl-(pentapeptide) pyrophosphoryl-undecaprenol N-acetylglucosamine transferase (383 aa).

UDP-N-acetyl-alpha-D-glucosamine is bound by residues 10–12 (TGG), Asn124, Arg165, Ser190, Ile245, and Gln290. The segment at 363–383 (SPFGQAREPGQKPARPPDPAS) is disordered.

Belongs to the glycosyltransferase 28 family. MurG subfamily.

It is found in the cell inner membrane. It carries out the reaction di-trans,octa-cis-undecaprenyl diphospho-N-acetyl-alpha-D-muramoyl-L-alanyl-D-glutamyl-meso-2,6-diaminopimeloyl-D-alanyl-D-alanine + UDP-N-acetyl-alpha-D-glucosamine = di-trans,octa-cis-undecaprenyl diphospho-[N-acetyl-alpha-D-glucosaminyl-(1-&gt;4)]-N-acetyl-alpha-D-muramoyl-L-alanyl-D-glutamyl-meso-2,6-diaminopimeloyl-D-alanyl-D-alanine + UDP + H(+). Its pathway is cell wall biogenesis; peptidoglycan biosynthesis. In terms of biological role, cell wall formation. Catalyzes the transfer of a GlcNAc subunit on undecaprenyl-pyrophosphoryl-MurNAc-pentapeptide (lipid intermediate I) to form undecaprenyl-pyrophosphoryl-MurNAc-(pentapeptide)GlcNAc (lipid intermediate II). In Anaeromyxobacter dehalogenans (strain 2CP-1 / ATCC BAA-258), this protein is UDP-N-acetylglucosamine--N-acetylmuramyl-(pentapeptide) pyrophosphoryl-undecaprenol N-acetylglucosamine transferase.